The following is a 228-amino-acid chain: Uracil-DNA glycosylase (228 aa).

Aspartate 64 serves as the catalytic Proton acceptor.

It belongs to the uracil-DNA glycosylase (UDG) superfamily. UNG family.

It localises to the cytoplasm. It catalyses the reaction Hydrolyzes single-stranded DNA or mismatched double-stranded DNA and polynucleotides, releasing free uracil.. Its function is as follows. Excises uracil residues from the DNA which can arise as a result of misincorporation of dUMP residues by DNA polymerase or due to deamination of cytosine. This Pectobacterium carotovorum subsp. carotovorum (strain PC1) protein is Uracil-DNA glycosylase.